The following is a 136-amino-acid chain: Small ribosomal subunit protein bS6 (136 aa).

The segment at 99 to 136 (QSEMLKAEENRSERRERRERPEHGGHEGLDGDSDKADE) is disordered. The segment covering 103 to 136 (LKAEENRSERRERRERPEHGGHEGLDGDSDKADE) has biased composition (basic and acidic residues).

It belongs to the bacterial ribosomal protein bS6 family.

In terms of biological role, binds together with bS18 to 16S ribosomal RNA. This is Small ribosomal subunit protein bS6 from Azotobacter vinelandii (strain DJ / ATCC BAA-1303).